Reading from the N-terminus, the 1010-residue chain is Collagen, type I, alpha 1b (1010 aa).

Residues 1-24 (SSGPPQPGPMGPMGPRGPPGPPGS) show a composition bias toward pro residues. The disordered stretch occupies residues 1-969 (SSGPPQPGPM…PDGTQKSPAR (969 aa)). Low complexity predominate over residues 25-48 (SGPQGFTGPPGEPGEPGASGAMGS). Residues 58 to 72 (NGDDGEPGKPGRPGE) are compositionally biased toward basic and acidic residues. The segment covering 73–82 (RGAAGPQGAR) has biased composition (low complexity). Residues 145-159 (GGPPGPTGPAGPPGF) are compositionally biased toward pro residues. 2 stretches are compositionally biased toward gly residues: residues 160 to 179 (PGGAGVKGETGPAGGRGNEG) and 203 to 212 (GTDGGPGAKG). Composition is skewed to low complexity over residues 213 to 268 (SPGA…PGPA) and 300 to 310 (ERGAPGARGFP). A compositionally biased stretch (gly residues) spans 311 to 323 (GADGGAGGKGAPG). 2 stretches are compositionally biased toward low complexity: residues 324-343 (ERGATGESGSPGAPGAPGSK) and 405-448 (PAGA…APGE). Composition is skewed to gly residues over residues 468–477 (GAPGLGGPTG), 486–495 (GAPGGLGAPG), and 519–528 (GGKGGDGAPG). Composition is skewed to low complexity over residues 559–568 (VAGPTGPRGA) and 581–596 (AGFAGPPGADGQPGAK). 2 stretches are compositionally biased toward gly residues: residues 609-618 (GAPGPGGPVG) and 633-642 (GARGGAGPPG). Low complexity-rich tracts occupy residues 643–662 (ATGFPGPAGRVGPSGPAGAA), 679–701 (ETGAAGRPGEAGAAGAPGPSGEK), and 796–805 (APGAVGPSGK). The span at 834–847 (KGDRGEAGEAGDRG) shows a compositional bias: basic and acidic residues. Low complexity predominate over residues 872–900 (PAGASGPAGPRGPAGSNGAAGKDGMNGLP). Residues 918-933 (AGPPGPPGPAGPPGPP) are compositionally biased toward pro residues. Positions 982–1010 (RLPLLDLAPMDVGAPDQEFGVEVGPVCFL) constitute a Fibrillar collagen NC1 domain.

Belongs to the fibrillar collagen family.

The protein localises to the secreted. Its subcellular location is the extracellular space. It is found in the extracellular matrix. The sequence is that of Collagen, type I, alpha 1b from Epinephelus marginatus (Dusky grouper).